We begin with the raw amino-acid sequence, 125 residues long: Small ribosomal subunit protein uS12 (125 aa).

The disordered stretch occupies residues 1–26 (MPTINQLVRKSRKTVKAQSDSPALKN). Residue Asp-89 is modified to 3-methylthioaspartic acid.

The protein belongs to the universal ribosomal protein uS12 family. In terms of assembly, part of the 30S ribosomal subunit. Contacts proteins S8 and S17. May interact with IF1 in the 30S initiation complex.

With S4 and S5 plays an important role in translational accuracy. In terms of biological role, interacts with and stabilizes bases of the 16S rRNA that are involved in tRNA selection in the A site and with the mRNA backbone. Located at the interface of the 30S and 50S subunits, it traverses the body of the 30S subunit contacting proteins on the other side and probably holding the rRNA structure together. The combined cluster of proteins S8, S12 and S17 appears to hold together the shoulder and platform of the 30S subunit. The polypeptide is Small ribosomal subunit protein uS12 (Clostridium tetani (strain Massachusetts / E88)).